Here is a 366-residue protein sequence, read N- to C-terminus: 3-dehydroquinate synthase (366 aa).

NAD(+) contacts are provided by residues 75-80, 109-113, 133-134, Lys-146, Lys-155, and 173-176; these read DGEQYK, GVIGD, TT, and CLST. Positions 188, 251, and 268 each coordinate Zn(2+).

The protein belongs to the sugar phosphate cyclases superfamily. Dehydroquinate synthase family. The cofactor is NAD(+). Co(2+) is required as a cofactor. Zn(2+) serves as cofactor.

The protein localises to the cytoplasm. The catalysed reaction is 7-phospho-2-dehydro-3-deoxy-D-arabino-heptonate = 3-dehydroquinate + phosphate. It participates in metabolic intermediate biosynthesis; chorismate biosynthesis; chorismate from D-erythrose 4-phosphate and phosphoenolpyruvate: step 2/7. Catalyzes the conversion of 3-deoxy-D-arabino-heptulosonate 7-phosphate (DAHP) to dehydroquinate (DHQ). The sequence is that of 3-dehydroquinate synthase from Vibrio parahaemolyticus serotype O3:K6 (strain RIMD 2210633).